We begin with the raw amino-acid sequence, 509 residues long: Maturase K (509 aa).

It belongs to the intron maturase 2 family. MatK subfamily.

It localises to the plastid. The protein resides in the chloroplast. Its function is as follows. Usually encoded in the trnK tRNA gene intron. Probably assists in splicing its own and other chloroplast group II introns. The chain is Maturase K from Solanum tuberosum (Potato).